We begin with the raw amino-acid sequence, 121 residues long: Natriuretic peptides B (121 aa).

An N-terminal signal peptide occupies residues 1–26 (MDLQKVLPQMILLLLFLNLSPLGGHS). Cysteines 99 and 115 form a disulfide.

Belongs to the natriuretic peptide family. In terms of processing, the precursor molecule is proteolytically cleaved by the endoprotease Furin to produce brain natriuretic peptide 45. May undergo further proteolytic cleavage by various proteases such as DPP4, MME and possibly FAP, to give rise to a variety of shorter peptides. May be cleaved at Ser-91 by the prolyl endopeptidase FAP (seprase) activity (in vitro). May be degraded by IDE. During IDE degradation, the resulting products initially increase the activation of NPR1 and can also stimulate NPR2 to produce cGMP before the fragments are completely degraded and inactivated by IDE (in vitro). In terms of tissue distribution, expressed in the atria and ventricles, but at much lower levels than NPPA. Expression levels in the ventricles are slightly higher than in the atria. Very low levels of expression detected in the brain, hypothalamus, lung and aorta. Atria (at protein level). Cardiocytes (at protein level).

The protein resides in the secreted. Functionally, cardiac hormone that plays a key role in mediating cardio-renal homeostasis. May also function as a paracrine antifibrotic factor in the heart. Acts by specifically binding and stimulating NPR1 to produce cGMP, which in turn activates effector proteins that drive various biological responses. Likely involved in regulating the extracellular fluid volume and maintaining the fluid-electrolyte balance through natriuresis, diuresis, kaluresis and chloruresis. The polypeptide is Natriuretic peptides B (Nppb) (Rattus norvegicus (Rat)).